The primary structure comprises 365 residues: DNA replication and repair protein RecF (365 aa).

Residue 30 to 37 (GANGQGKT) coordinates ATP.

The protein belongs to the RecF family.

The protein resides in the cytoplasm. The RecF protein is involved in DNA metabolism; it is required for DNA replication and normal SOS inducibility. RecF binds preferentially to single-stranded, linear DNA. It also seems to bind ATP. The chain is DNA replication and repair protein RecF from Geobacter sulfurreducens (strain ATCC 51573 / DSM 12127 / PCA).